Consider the following 41-residue polypeptide: Large ribosomal subunit protein bL36 (41 aa).

The protein belongs to the bacterial ribosomal protein bL36 family.

This chain is Large ribosomal subunit protein bL36, found in Xanthobacter autotrophicus (strain ATCC BAA-1158 / Py2).